Consider the following 163-residue polypeptide: Transcriptional repressor NrdR (163 aa).

Residues 3–34 (CPFCRHPDSRVVDSRVSDDGSSIRRRRQCPQC) fold into a zinc finger. The ATP-cone domain maps to 46 to 136 (LTVIKRSGIG…VYQAFESLDD (91 aa)).

Belongs to the NrdR family. It depends on Zn(2+) as a cofactor.

Negatively regulates transcription of bacterial ribonucleotide reductase nrd genes and operons by binding to NrdR-boxes. The sequence is that of Transcriptional repressor NrdR from Renibacterium salmoninarum (strain ATCC 33209 / DSM 20767 / JCM 11484 / NBRC 15589 / NCIMB 2235).